A 356-amino-acid chain; its full sequence is Butyrate kinase 2 (356 aa).

This sequence belongs to the acetokinase family. Homodimer.

The protein resides in the cytoplasm. The enzyme catalyses butanoate + ATP = butanoyl phosphate + ADP. The protein operates within lipid metabolism; butanoate metabolism. In terms of biological role, catalyzes the conversion of butyryl-CoA through butyryl phosphate to butyrate. The chain is Butyrate kinase 2 (buk2) from Clostridium acetobutylicum (strain ATCC 824 / DSM 792 / JCM 1419 / IAM 19013 / LMG 5710 / NBRC 13948 / NRRL B-527 / VKM B-1787 / 2291 / W).